We begin with the raw amino-acid sequence, 331 residues long: Probable allantoicase (331 aa).

It belongs to the allantoicase family.

The enzyme catalyses allantoate + H2O = (S)-ureidoglycolate + urea. It functions in the pathway nitrogen metabolism; (S)-allantoin degradation; (S)-ureidoglycolate from allantoate (aminidohydrolase route): step 1/1. The protein is Probable allantoicase of Pseudomonas syringae pv. syringae (strain B728a).